The following is a 193-amino-acid chain: Ribosomal RNA small subunit methyltransferase G (193 aa).

S-adenosyl-L-methionine is bound by residues Gly-61, Leu-66, 112–113 (IE), and Arg-126.

It belongs to the methyltransferase superfamily. RNA methyltransferase RsmG family.

It localises to the cytoplasm. The enzyme catalyses guanosine(527) in 16S rRNA + S-adenosyl-L-methionine = N(7)-methylguanosine(527) in 16S rRNA + S-adenosyl-L-homocysteine. Functionally, specifically methylates the N7 position of guanine in position 527 of 16S rRNA. This chain is Ribosomal RNA small subunit methyltransferase G, found in Paracoccus denitrificans (strain Pd 1222).